Consider the following 425-residue polypeptide: Paired box pox-neuro protein (425 aa).

The segment at residues 5 to 132 (GQAGVNQLGG…SSINRILRNS (128 aa)) is a DNA-binding region (paired). Residues 8 to 64 (GVNQLGGVFVNGRPLPDCVRRRIVDLALCGVRPCDISRQLLVSHGCVSKILTRFYET) form a PAI subdomain region. The interval 84–132 (TVVKKIIRLKEENSGMFAWEIREQLQQQRVCDPSSVPSISSINRILRNS) is RED subdomain. Disordered regions lie at residues 159 to 188 (QAGSGPSNGYGGQAPPPPVTVAPPTPAATP), 297 to 358 (TKSE…RKRN), and 383 to 425 (LESS…EVVN). The segment covering 172 to 185 (APPPPVTVAPPTPA) has biased composition (pro residues). Composition is skewed to low complexity over residues 323 to 332 (SSPAALSLTA) and 340 to 349 (GSAPEASPGS). Over residues 402–425 (TPEDEDPAEAEEEQEEEDSVEVVN) the composition is skewed to acidic residues.

In terms of tissue distribution, central and peripheral nervous systems.

The protein localises to the nucleus. Functionally, transcriptional regulator that specifies poly-innervated organs (chemosensory bristle). Also controls the number of neurons. In Drosophila melanogaster (Fruit fly), this protein is Paired box pox-neuro protein (Poxn).